A 76-amino-acid polypeptide reads, in one-letter code: EIPQNLGSDIPHDIIKLPNGQWCKTPGALCSSRSECCKAKHSDSVTYSSGCSRQWSDQQGLFINQCRTCNVESSMC.

Intrachain disulfides connect Cys23/Cys37, Cys30/Cys51, Cys36/Cys66, and Cys69/Cys76.

This sequence belongs to the neurotoxin 21 family. Expressed by the venom gland.

The protein localises to the secreted. Neurotoxin with probable ion channel impairing activity. In vivo, is both paralytic and lethal, when injected into lepidopteran larvae. This Apomastus schlingeri (Trap-door spider) protein is U1-cyrtautoxin-As1d.